Reading from the N-terminus, the 158-residue chain is 6,7-dimethyl-8-ribityllumazine synthase (158 aa).

5-amino-6-(D-ribitylamino)uracil contacts are provided by residues phenylalanine 22, 57-59 (AVE), and 81-83 (AVI). 86–87 (GT) lines the (2S)-2-hydroxy-3-oxobutyl phosphate pocket. Residue histidine 89 is the Proton donor of the active site. Phenylalanine 114 is a 5-amino-6-(D-ribitylamino)uracil binding site. A (2S)-2-hydroxy-3-oxobutyl phosphate-binding site is contributed by arginine 128.

The protein belongs to the DMRL synthase family. In terms of assembly, forms an icosahedral capsid composed of 60 subunits, arranged as a dodecamer of pentamers.

It carries out the reaction (2S)-2-hydroxy-3-oxobutyl phosphate + 5-amino-6-(D-ribitylamino)uracil = 6,7-dimethyl-8-(1-D-ribityl)lumazine + phosphate + 2 H2O + H(+). It functions in the pathway cofactor biosynthesis; riboflavin biosynthesis; riboflavin from 2-hydroxy-3-oxobutyl phosphate and 5-amino-6-(D-ribitylamino)uracil: step 1/2. Functionally, catalyzes the formation of 6,7-dimethyl-8-ribityllumazine by condensation of 5-amino-6-(D-ribitylamino)uracil with 3,4-dihydroxy-2-butanone 4-phosphate. This is the penultimate step in the biosynthesis of riboflavin. The sequence is that of 6,7-dimethyl-8-ribityllumazine synthase from Shewanella piezotolerans (strain WP3 / JCM 13877).